The primary structure comprises 518 residues: Protein nucleotidyltransferase YdiU (518 aa).

The tract at residues 1-22 (MTHLQFDNRLRAELPGDPEEGP) is disordered. Gly100, Gly102, Arg103, Lys123, Asp135, Gly136, Arg193, and Arg200 together coordinate ATP. Asp270 serves as the catalytic Proton acceptor. Positions 271 and 280 each coordinate Mg(2+). Residue Asp280 coordinates ATP.

This sequence belongs to the SELO family. Mg(2+) serves as cofactor. It depends on Mn(2+) as a cofactor.

The catalysed reaction is L-seryl-[protein] + ATP = 3-O-(5'-adenylyl)-L-seryl-[protein] + diphosphate. It carries out the reaction L-threonyl-[protein] + ATP = 3-O-(5'-adenylyl)-L-threonyl-[protein] + diphosphate. It catalyses the reaction L-tyrosyl-[protein] + ATP = O-(5'-adenylyl)-L-tyrosyl-[protein] + diphosphate. The enzyme catalyses L-histidyl-[protein] + UTP = N(tele)-(5'-uridylyl)-L-histidyl-[protein] + diphosphate. The catalysed reaction is L-seryl-[protein] + UTP = O-(5'-uridylyl)-L-seryl-[protein] + diphosphate. It carries out the reaction L-tyrosyl-[protein] + UTP = O-(5'-uridylyl)-L-tyrosyl-[protein] + diphosphate. Nucleotidyltransferase involved in the post-translational modification of proteins. It can catalyze the addition of adenosine monophosphate (AMP) or uridine monophosphate (UMP) to a protein, resulting in modifications known as AMPylation and UMPylation. In Xanthomonas campestris pv. campestris (strain 8004), this protein is Protein nucleotidyltransferase YdiU.